A 144-amino-acid polypeptide reads, in one-letter code: Superoxide dismutase [Mn], mitochondrial (144 aa).

Positions 10, 58, and 143 each coordinate Mn(2+).

Belongs to the iron/manganese superoxide dismutase family. In terms of assembly, homotetramer. It depends on Mn(2+) as a cofactor.

Its subcellular location is the mitochondrion matrix. It carries out the reaction 2 superoxide + 2 H(+) = H2O2 + O2. In terms of biological role, destroys superoxide anion radicals which are normally produced within the cells and which are toxic to biological systems. This is Superoxide dismutase [Mn], mitochondrial from Petromyzon marinus (Sea lamprey).